The sequence spans 747 residues: Heterogeneous nuclear ribonucleoprotein U-like protein 2 (747 aa).

An SAP domain is found at 3–37; sequence VKRLKVTELRSELQRRGLDSRGLKVDLAQRLQEAL. Disordered regions lie at residues 40-242 and 627-666; these read EMLE…EEED and EEAR…GQRR. Positions 73–97 are enriched in acidic residues; sequence GDEEEDEEEEEEDEEALLEDEDEEP. Low complexity predominate over residues 115 to 125; it reads EAAAMEAAAEP. Over residues 137-147 the composition is skewed to gly residues; it reads GSGGVNGGEEQ. Residues 148 to 163 show a composition bias toward basic and acidic residues; that stretch reads GLGKREEDEPEERSGD. Ser161 bears the Phosphoserine mark. Position 165 is a phosphothreonine (Thr165). Ser168, Ser185, Ser188, Ser226, and Ser228 each carry phosphoserine. Positions 185–223 are enriched in basic and acidic residues; sequence SEKSKPAGSDGERRGVKRQRDEKDEHGRAYYEFREEAYH. Residues 226-419 enclose the B30.2/SPRY domain; it reads SKSPLPPEEE…VELNFGQKEE (194 aa). Residues 232 to 242 are compositionally biased toward acidic residues; it reads PEEEAKDEEED. A compositionally biased stretch (basic and acidic residues) spans 627-639; it reads EEARKLLPPSEKR. Over residues 640-654 the composition is skewed to basic residues; it reads TNRRNNRNKRNRQNR. An omega-N-methylarginine mark is found at Arg656, Arg684, Arg738, and Arg747.

As to quaternary structure, binds to MLF1 and retains it in the nucleus.

Its subcellular location is the nucleus. This Homo sapiens (Human) protein is Heterogeneous nuclear ribonucleoprotein U-like protein 2 (HNRNPUL2).